Consider the following 310-residue polypeptide: Proline iminopeptidase (310 aa).

One can recognise an AB hydrolase-1 domain in the interval 33 to 290 (PVIFLHGGPG…RVVQAGHCAF (258 aa)). S107 functions as the Nucleophile in the catalytic mechanism. The active site involves D260. H287 serves as the catalytic Proton donor.

The protein belongs to the peptidase S33 family.

It is found in the cytoplasm. The catalysed reaction is Release of N-terminal proline from a peptide.. Hydrolyzes peptides having the structure Pro-Y-Z to yield free proline. Also hydrolyzes the dipeptide Pro-Gly. In Neisseria gonorrhoeae, this protein is Proline iminopeptidase (pip).